The sequence spans 292 residues: Protein/nucleic acid deglycase HchA (292 aa).

Residues 1–12 (MSQDVNELSKQP) show a composition bias toward polar residues. The disordered stretch occupies residues 1-23 (MSQDVNELSKQPTPDKAEDNAFF). Catalysis depends on Cys-190, which acts as the Nucleophile.

This sequence belongs to the peptidase C56 family. HchA subfamily.

The protein localises to the cytoplasm. The catalysed reaction is N(omega)-(1-hydroxy-2-oxopropyl)-L-arginyl-[protein] + H2O = lactate + L-arginyl-[protein] + H(+). It carries out the reaction N(6)-(1-hydroxy-2-oxopropyl)-L-lysyl-[protein] + H2O = lactate + L-lysyl-[protein] + H(+). It catalyses the reaction S-(1-hydroxy-2-oxopropyl)-L-cysteinyl-[protein] + H2O = lactate + L-cysteinyl-[protein] + H(+). The enzyme catalyses N(omega)-(1-hydroxy-2-oxoethyl)-L-arginyl-[protein] + H2O = L-arginyl-[protein] + glycolate + H(+). The catalysed reaction is N(6)-(1-hydroxy-2-oxoethyl)-L-lysyl-[protein] + H2O = glycolate + L-lysyl-[protein] + H(+). It carries out the reaction S-(1-hydroxy-2-oxoethyl)-L-cysteinyl-[protein] + H2O = glycolate + L-cysteinyl-[protein] + H(+). It catalyses the reaction N(2)-(1-hydroxy-2-oxopropyl)-dGTP + H2O = lactate + dGTP + H(+). The enzyme catalyses N(2)-(1-hydroxy-2-oxopropyl)-GTP + H2O = lactate + GTP + H(+). The catalysed reaction is N(2)-(1-hydroxy-2-oxopropyl)-GDP + H2O = lactate + GDP + H(+). It carries out the reaction N(2)-(1-hydroxy-2-oxopropyl)-GMP + H2O = lactate + GMP + H(+). It catalyses the reaction N(2)-(1-hydroxy-2-oxoethyl)-dGTP + H2O = dGTP + glycolate + H(+). The enzyme catalyses N(2)-(1-hydroxy-2-oxoethyl)-GTP + H2O = glycolate + GTP + H(+). The catalysed reaction is N(2)-(1-hydroxy-2-oxoethyl)-GDP + H2O = glycolate + GDP + H(+). It carries out the reaction N(2)-(1-hydroxy-2-oxoethyl)-GMP + H2O = glycolate + GMP + H(+). It catalyses the reaction an N(2)-(1-hydroxy-2-oxopropyl)-guanosine in RNA + H2O = a guanosine in RNA + lactate + H(+). The enzyme catalyses an N(2)-(1-hydroxy-2-oxopropyl)-2'-deoxyguanosine in DNA + H2O = a 2'-deoxyguanosine in DNA + lactate + H(+). The catalysed reaction is an N(2)-(1-hydroxy-2-oxoethyl)-guanosine in RNA + H2O = a guanosine in RNA + glycolate + H(+). It carries out the reaction an N(2)-(1-hydroxy-2-oxoethyl)-2'-deoxyguanosine in DNA + H2O = a 2'-deoxyguanosine in DNA + glycolate + H(+). In terms of biological role, protein and nucleotide deglycase that catalyzes the deglycation of the Maillard adducts formed between amino groups of proteins or nucleotides and reactive carbonyl groups of glyoxals. Thus, functions as a protein deglycase that repairs methylglyoxal- and glyoxal-glycated proteins, and releases repaired proteins and lactate or glycolate, respectively. Deglycates cysteine, arginine and lysine residues in proteins, and thus reactivates these proteins by reversing glycation by glyoxals. Acts on early glycation intermediates (hemithioacetals and aminocarbinols), preventing the formation of Schiff bases and advanced glycation endproducts (AGE). Also functions as a nucleotide deglycase able to repair glycated guanine in the free nucleotide pool (GTP, GDP, GMP, dGTP) and in DNA and RNA. Is thus involved in a major nucleotide repair system named guanine glycation repair (GG repair), dedicated to reversing methylglyoxal and glyoxal damage via nucleotide sanitization and direct nucleic acid repair. Plays an important role in protecting cells from carbonyl stress. This chain is Protein/nucleic acid deglycase HchA, found in Staphylococcus aureus (strain Mu3 / ATCC 700698).